The chain runs to 238 residues: Ribosomal RNA small subunit methyltransferase G (238 aa).

S-adenosyl-L-methionine contacts are provided by residues Gly77, Phe82, 128 to 129 (AE), and Arg147. Residues 219–238 (RQTPKKYPRKAGLPNKEPIE) form a disordered region.

The protein belongs to the methyltransferase superfamily. RNA methyltransferase RsmG family.

It is found in the cytoplasm. Functionally, specifically methylates the N7 position of guanine in position 535 of 16S rRNA. The chain is Ribosomal RNA small subunit methyltransferase G from Oceanobacillus iheyensis (strain DSM 14371 / CIP 107618 / JCM 11309 / KCTC 3954 / HTE831).